Consider the following 470-residue polypeptide: Meiosis-specific with OB domain-containing protein (470 aa).

The OB DNA-binding region spans 167 to 272; sequence IINVLAAVRS…EANILLNFIR (106 aa).

Belongs to the MEIOB family. As to quaternary structure, component of a multiprotein complex with RPA2 and SPATA22. Interacts with SPATA22. Interacts with the complex BRME1:HSF2BP:BRCA2.

It localises to the cytoplasm. The protein localises to the nucleus. It is found in the chromosome. Single-stranded DNA-binding protein required for homologous recombination in meiosis I. Required for double strand breaks (DSBs) repair and crossover formation and promotion of faithful and complete synapsis. Not required for the initial loading of recombinases but required to maintain a proper number of RAD51 and DMC1 foci after the zygotene stage. May act by ensuring the stabilization of recombinases, which is required for successful homology search and meiotic recombination. Displays Single-stranded DNA 3'-5' exonuclease activity in vitro. The protein is Meiosis-specific with OB domain-containing protein of Rattus norvegicus (Rat).